The following is a 282-amino-acid chain: Succinate dehydrogenase [ubiquinone] iron-sulfur subunit, mitochondrial (282 aa).

Residues 43–131 enclose the 2Fe-2S ferredoxin-type domain; the sequence is YRFNPEAPGA…STKIYPLPHM (89 aa). [2Fe-2S] cluster contacts are provided by C91, C96, C99, and C111. One can recognise a 4Fe-4S ferredoxin-type domain in the interval 174–204; the sequence is ERDRLDGLYECILCACCSTSCPSYWWNADKY. [4Fe-4S] cluster-binding residues include C184, C187, and C190. C194 serves as a coordination point for [3Fe-4S] cluster. Residue W199 coordinates a ubiquinone. [3Fe-4S] cluster is bound by residues C241 and C247. C251 is a [4Fe-4S] cluster binding site.

The protein belongs to the succinate dehydrogenase/fumarate reductase iron-sulfur protein family. As to quaternary structure, component of complex II composed of four subunits: a flavoprotein (FP), an iron-sulfur protein (IP), and a cytochrome b composed of a large and a small subunit. Requires [2Fe-2S] cluster as cofactor. The cofactor is [3Fe-4S] cluster. It depends on [4Fe-4S] cluster as a cofactor.

Its subcellular location is the mitochondrion inner membrane. It carries out the reaction a quinone + succinate = fumarate + a quinol. It participates in carbohydrate metabolism; tricarboxylic acid cycle; fumarate from succinate (eukaryal route): step 1/1. In terms of biological role, iron-sulfur protein (IP) subunit of succinate dehydrogenase (SDH) that is involved in complex II of the mitochondrial electron transport chain and is responsible for transferring electrons from succinate to ubiquinone (coenzyme Q). The polypeptide is Succinate dehydrogenase [ubiquinone] iron-sulfur subunit, mitochondrial (Caenorhabditis briggsae).